The chain runs to 498 residues: ATP synthase subunit beta, chloroplastic (498 aa).

Position 172 to 179 (172 to 179) interacts with ATP; that stretch reads GGAGVGKT.

This sequence belongs to the ATPase alpha/beta chains family. As to quaternary structure, F-type ATPases have 2 components, CF(1) - the catalytic core - and CF(0) - the membrane proton channel. CF(1) has five subunits: alpha(3), beta(3), gamma(1), delta(1), epsilon(1). CF(0) has four main subunits: a(1), b(1), b'(1) and c(9-12).

The protein localises to the plastid. It is found in the chloroplast thylakoid membrane. It carries out the reaction ATP + H2O + 4 H(+)(in) = ADP + phosphate + 5 H(+)(out). Functionally, produces ATP from ADP in the presence of a proton gradient across the membrane. The catalytic sites are hosted primarily by the beta subunits. The protein is ATP synthase subunit beta, chloroplastic of Chamaerops humilis (Mediterranean fan palm).